The following is a 217-amino-acid chain: 3-isopropylmalate dehydratase small subunit (217 aa).

This sequence belongs to the LeuD family. LeuD type 1 subfamily. Heterodimer of LeuC and LeuD.

It carries out the reaction (2R,3S)-3-isopropylmalate = (2S)-2-isopropylmalate. Its pathway is amino-acid biosynthesis; L-leucine biosynthesis; L-leucine from 3-methyl-2-oxobutanoate: step 2/4. Its function is as follows. Catalyzes the isomerization between 2-isopropylmalate and 3-isopropylmalate, via the formation of 2-isopropylmaleate. This chain is 3-isopropylmalate dehydratase small subunit, found in Paraburkholderia phymatum (strain DSM 17167 / CIP 108236 / LMG 21445 / STM815) (Burkholderia phymatum).